The following is a 223-amino-acid chain: Endonuclease V (223 aa).

The Mg(2+) site is built by D35 and D103.

Belongs to the endonuclease V family. The cofactor is Mg(2+).

It is found in the cytoplasm. It carries out the reaction Endonucleolytic cleavage at apurinic or apyrimidinic sites to products with a 5'-phosphate.. Functionally, DNA repair enzyme involved in the repair of deaminated bases. Selectively cleaves double-stranded DNA at the second phosphodiester bond 3' to a deoxyinosine leaving behind the intact lesion on the nicked DNA. The protein is Endonuclease V of Escherichia coli O45:K1 (strain S88 / ExPEC).